Here is a 243-residue protein sequence, read N- to C-terminus: MLISTFVFLLYEVTALSTAIHVTKSYTHTRTGTSFFMYQKEAFYRGRSSTRQFNNTRSPSGRSASRSSNFSHRSSSRDSFSSNRSYSSSLSRSPEEPLRTILVENLTRNVTKEHIAEIFGIYGLIDHIFMPIYKKSELNKGYCYIEYVYHDQAANAVDKMNNAELDGEELFVSIKRFPFESLHKNHKHYENSYRPSRSQNNSHYNDKSFHRSRYSRARSRSPGSNISEYSDQSPPYHSYRHRP.

The interval 48 to 92 (SSTRQFNNTRSPSGRSASRSSNFSHRSSSRDSFSSNRSYSSSLSR) is disordered. Over residues 57–92 (RSPSGRSASRSSNFSHRSSSRDSFSSNRSYSSSLSR) the composition is skewed to low complexity. Residues 99–177 (RTILVENLTR…EELFVSIKRF (79 aa)) enclose the RRM domain. The segment at 189–243 (YENSYRPSRSQNNSHYNDKSFHRSRYSRARSRSPGSNISEYSDQSPPYHSYRHRP) is disordered. The segment covering 193–203 (YRPSRSQNNSH) has biased composition (polar residues). Residues 210–219 (HRSRYSRARS) show a composition bias toward basic residues. The span at 222-235 (PGSNISEYSDQSPP) shows a compositional bias: polar residues.

It belongs to the splicing factor SR family. In terms of assembly, component of the active spliceosome.

The protein localises to the cytoplasm. Its subcellular location is the nucleus. In terms of biological role, putative component of the spliceosome which enhances the formation of the ATP-dependent A complex of the spliceosome. may participate in mRNA 3'-end cleavage. Also mediates increase of mRNA abundance and translational efficiency. The polypeptide is RNA-binding protein with serine-rich domain 1 homolog (Schizosaccharomyces pombe (strain 972 / ATCC 24843) (Fission yeast)).